We begin with the raw amino-acid sequence, 1360 residues long: Transmembrane protein 94 (1360 aa).

The Cytoplasmic segment spans residues 1–64; it reads MDLREKHLGE…FLHLSNRCSC (64 aa). Residues 65 to 85 traverse the membrane as a helical segment; sequence FHWPGASLMLLAVLLLLCCCG. The Lumenal segment spans residues 86–92; sequence GQPAGSQ. Residues 93 to 113 form a helical membrane-spanning segment; sequence GVELVNASALFLLLLLNLVLI. Topologically, residues 114-273 are cytoplasmic; that stretch reads GRQDRLKRRE…RPVTALDNER (160 aa). 2 positions are modified to phosphoserine: serine 221 and serine 225. The chain crosses the membrane as a helical span at residues 274-294; it reads FTVQSVMLHYAVPVVLAGFLI. The Lumenal portion of the chain corresponds to 295 to 320; the sequence is TNALRFMFKAPGVTSWQYTLLQLQVN. The chain crosses the membrane as a helical span at residues 321 to 341; it reads GMLPILPLLFPVLWVLATACG. At 342-1096 the chain is on the cytoplasmic side; that stretch reads EARVLAQMSK…RHATYGIRKC (755 aa). A DKQGIL motif is present at residues 417 to 422; that stretch reads DKQGIL. Phosphoserine is present on residues serine 444, serine 445, and serine 454. A disordered region spans residues 487-545; the sequence is EQERSDWLADGPKPSEPYPHHKGHGRSKHPSGSNVSFSRDTEGGEEEPSKAQPGTEGDP. Over residues 506-515 the composition is skewed to basic residues; that stretch reads HHKGHGRSKH. Residues serine 517, serine 522, serine 802, and serine 945 each carry the phosphoserine modification. A helical transmembrane segment spans residues 1097–1117; the sequence is FLFLLQCQLTLVVIQFLSCLV. Topologically, residues 1118–1124 are lumenal; it reads QLPPLLS. A helical transmembrane segment spans residues 1125-1145; the sequence is TTDILWLSCFCYPLLSISLLG. Over 1146 to 1171 the chain is Cytoplasmic; it reads KPPHSSIMSMATGKNLQSIPKKTQHY. The helical transmembrane segment at 1172–1192 threads the bilayer; sequence FLLCFLLKFSLTISSCLVCFG. The Lumenal portion of the chain corresponds to 1193-1232; the sequence is FTLQSFCDSARARNLTNCSSVMLCSNDDRAPAWFEDFANG. Residues asparagine 1206 and asparagine 1209 are each glycosylated (N-linked (GlcNAc...) asparagine). The chain crosses the membrane as a helical span at residues 1233–1253; it reads LLSAQKLTAALIVLHTVFISI. The Cytoplasmic segment spans residues 1254–1269; it reads THVHRTKPLWRKSPLT. The chain crosses the membrane as a helical span at residues 1270–1290; it reads NLWWAVTVPVVLLGQVVQTVV. Residues 1291-1310 are Lumenal-facing; sequence DLQLWTHRDSRVHFGLEDVP. Residues 1311–1331 form a helical membrane-spanning segment; that stretch reads LLTWLLGCLSLVLVVVTNEIV. Residues 1332 to 1360 lie on the Cytoplasmic side of the membrane; the sequence is KLHEIRVRVRYQKRQKLQFETKLGMNSPF. Positions 1355–1357 match the GMN; metal-binding motif motif; the sequence is GMN.

In terms of assembly, forms homooligomers.

Its subcellular location is the endoplasmic reticulum membrane. Could function in the uptake of Mg(2+) from the cytosol into the endoplasmic reticulum and regulate intracellular Mg(2+) homeostasis. The polypeptide is Transmembrane protein 94 (Mus musculus (Mouse)).